A 142-amino-acid polypeptide reads, in one-letter code: Large ribosomal subunit protein uL11 (142 aa).

Belongs to the universal ribosomal protein uL11 family. Part of the ribosomal stalk of the 50S ribosomal subunit. Interacts with L10 and the large rRNA to form the base of the stalk. L10 forms an elongated spine to which L12 dimers bind in a sequential fashion forming a multimeric L10(L12)X complex. Post-translationally, one or more lysine residues are methylated.

In terms of biological role, forms part of the ribosomal stalk which helps the ribosome interact with GTP-bound translation factors. This chain is Large ribosomal subunit protein uL11, found in Shewanella oneidensis (strain ATCC 700550 / JCM 31522 / CIP 106686 / LMG 19005 / NCIMB 14063 / MR-1).